The chain runs to 171 residues: UPF0303 protein YPTS_2661 (171 aa).

The protein belongs to the UPF0303 family.

The polypeptide is UPF0303 protein YPTS_2661 (Yersinia pseudotuberculosis serotype IB (strain PB1/+)).